The primary structure comprises 246 residues: Complement C1q tumor necrosis factor-related protein 3 (246 aa).

Positions 1–22 (MLWRQLIYWQLLALFFLPFCLC) are cleaved as a signal peptide. The Collagen-like domain occupies 51 to 113 (GYQGPPGPPG…KGEKGYPGIP (63 aa)). Residues 53-110 (QGPPGPPGPPGIPGNHGNNGNNGATGHEGAKGEKGDKGDLGPRGERGQHGPKGEKGYP) are disordered. A compositionally biased stretch (pro residues) spans 55–64 (PPGPPGPPGI). The span at 65-74 (PGNHGNNGNN) shows a compositional bias: low complexity. A glycan (N-linked (GlcNAc...) asparagine) is linked at N70. The segment covering 80–107 (EGAKGEKGDKGDLGPRGERGQHGPKGEK) has biased composition (basic and acidic residues). Residues 113-246 (PPELQIAFMA…FAGFLLFETK (134 aa)) enclose the C1q domain.

In terms of processing, glycosylated on Asn-70. In terms of tissue distribution, expressed in colon and small intestine.

It is found in the secreted. This Homo sapiens (Human) protein is Complement C1q tumor necrosis factor-related protein 3 (C1QTNF3).